We begin with the raw amino-acid sequence, 65 residues long: MPKIKTNRAAAKRFRKTASGKYKAGHANRSHILTKKATKRKRNLRQQNHVRAEDAGRLDRMLPYL.

Positions 1-65 (MPKIKTNRAA…GRLDRMLPYL (65 aa)) are disordered. Residues 10–44 (AAKRFRKTASGKYKAGHANRSHILTKKATKRKRNL) show a composition bias toward basic residues. Basic and acidic residues predominate over residues 50–65 (VRAEDAGRLDRMLPYL).

It belongs to the bacterial ribosomal protein bL35 family.

This Xylella fastidiosa (strain M23) protein is Large ribosomal subunit protein bL35.